We begin with the raw amino-acid sequence, 118 residues long: MRVKRAVHAKKKRKKYLKAAKGYRGALSRRYKLAKQMYVRSKWYSYVGRKLKKRDMRKLWITRINIAARNEGLKYSEFIHGLKLAGVSINRKMLSELAVNDPEAFREYVKIAKEALAS.

It belongs to the bacterial ribosomal protein bL20 family.

Functionally, binds directly to 23S ribosomal RNA and is necessary for the in vitro assembly process of the 50S ribosomal subunit. It is not involved in the protein synthesizing functions of that subunit. The sequence is that of Large ribosomal subunit protein bL20 from Thermotoga petrophila (strain ATCC BAA-488 / DSM 13995 / JCM 10881 / RKU-1).